Consider the following 114-residue polypeptide: T cell receptor beta variable 6-4 (114 aa).

The first 21 residues, 1 to 21, serve as a signal peptide directing secretion; that stretch reads MSIRLLCCVAFSLLWAGPVTA. One can recognise an Ig-like domain in the interval 22-114; it reads GITQAPTSQI…TSVYFCASSD (93 aa). A disulfide bond links cysteine 42 and cysteine 110.

Alpha-beta TR is a heterodimer composed of an alpha and beta chain; disulfide-linked. The alpha-beta TR is associated with the transmembrane signaling CD3 coreceptor proteins to form the TR-CD3 (TcR or TCR). The assembly of alpha-beta TR heterodimers with CD3 occurs in the endoplasmic reticulum where a single alpha-beta TR heterodimer associates with one CD3D-CD3E heterodimer, one CD3G-CD3E heterodimer and one CD247 homodimer forming a stable octameric structure. CD3D-CD3E and CD3G-CD3E heterodimers preferentially associate with TR alpha and TR beta chains, respectively. The association of the CD247 homodimer is the last step of TcR assembly in the endoplasmic reticulum and is required for transport to the cell surface.

It localises to the cell membrane. V region of the variable domain of T cell receptor (TR) beta chain that participates in the antigen recognition. Alpha-beta T cell receptors are antigen specific receptors which are essential to the immune response and are present on the cell surface of T lymphocytes. Recognize peptide-major histocompatibility (MH) (pMH) complexes that are displayed by antigen presenting cells (APC), a prerequisite for efficient T cell adaptive immunity against pathogens. Binding of alpha-beta TR to pMH complex initiates TR-CD3 clustering on the cell surface and intracellular activation of LCK that phosphorylates the ITAM motifs of CD3G, CD3D, CD3E and CD247 enabling the recruitment of ZAP70. In turn ZAP70 phosphorylates LAT, which recruits numerous signaling molecules to form the LAT signalosome. The LAT signalosome propagates signal branching to three major signaling pathways, the calcium, the mitogen-activated protein kinase (MAPK) kinase and the nuclear factor NF-kappa-B (NF-kB) pathways, leading to the mobilization of transcription factors that are critical for gene expression and essential for T cell growth and differentiation. The T cell repertoire is generated in the thymus, by V-(D)-J rearrangement. This repertoire is then shaped by intrathymic selection events to generate a peripheral T cell pool of self-MH restricted, non-autoaggressive T cells. Post-thymic interaction of alpha-beta TR with the pMH complexes shapes TR structural and functional avidity. The sequence is that of T cell receptor beta variable 6-4 from Homo sapiens (Human).